The primary structure comprises 93 residues: Large ribosomal subunit protein eL42 (93 aa).

Residues cysteine 11, cysteine 14, cysteine 72, and cysteine 75 each contribute to the Zn(2+) site. The segment at 11 to 75 (CPHCHSHFEH…TDLKYRCSEC (65 aa)) adopts a C4-type zinc-finger fold.

It belongs to the eukaryotic ribosomal protein eL42 family. Part of the 50S ribosomal subunit. Zn(2+) is required as a cofactor.

Binds to the 23S rRNA. In Natronomonas pharaonis (strain ATCC 35678 / DSM 2160 / CIP 103997 / JCM 8858 / NBRC 14720 / NCIMB 2260 / Gabara) (Halobacterium pharaonis), this protein is Large ribosomal subunit protein eL42 (rpl44e).